We begin with the raw amino-acid sequence, 133 residues long: Small ribosomal subunit protein uS8 (133 aa).

This sequence belongs to the universal ribosomal protein uS8 family. As to quaternary structure, part of the 30S ribosomal subunit. Contacts proteins S5 and S12.

Functionally, one of the primary rRNA binding proteins, it binds directly to 16S rRNA central domain where it helps coordinate assembly of the platform of the 30S subunit. The polypeptide is Small ribosomal subunit protein uS8 (Protochlamydia amoebophila (strain UWE25)).